Consider the following 215-residue polypeptide: MKQELVLRWTFYFAGLIILAFGVSLTIEGKALGISPWDAFHYSLFQHFGLTVGQWSIIIGALIVGFTSLFTRAWPKIGALLNMVLIGVFIDFFNFILPALSTYTGSIIVFSLGVVLIGYGVGVYVSAGLGAGPRDSLMMLITEKTGWNVQWVRNGMELTILFAAWGMGGPIGFGTILTAILTGLILRFSLPQSIQLLNYAVARRTAAVKASPPVH.

5 consecutive transmembrane segments (helical) span residues Trp-9 to Gly-29, Leu-50 to Phe-70, Ile-77 to Leu-97, Ile-107 to Ala-127, and Ile-160 to Ile-180.

It is found in the cell membrane. This is an uncharacterized protein from Bacillus subtilis (strain 168).